Consider the following 154-residue polypeptide: Superoxide dismutase [Cu-Zn] (154 aa).

Cu cation-binding residues include His47, His49, and His64. A disulfide bond links Cys58 and Cys147. Zn(2+) contacts are provided by His64, His72, His81, and Asp84. His121 contacts Cu cation. The segment covering 125 to 136 has biased composition (basic and acidic residues); that stretch reads DDLGKGGNEESL. Residues 125–144 are disordered; the sequence is DDLGKGGNEESLKTGNAGPR. Position 144 (Arg144) interacts with substrate.

Belongs to the Cu-Zn superoxide dismutase family. In terms of assembly, homodimer. It depends on Cu cation as a cofactor. Zn(2+) is required as a cofactor.

The protein resides in the cytoplasm. It catalyses the reaction 2 superoxide + 2 H(+) = H2O2 + O2. In terms of biological role, destroys radicals which are normally produced within the cells and which are toxic to biological systems. The polypeptide is Superoxide dismutase [Cu-Zn] (SOD1) (Cordyceps tenuipes (Entomopathogenic fungus)).